The following is a 169-amino-acid chain: Lipoprotein signal peptidase (169 aa).

A run of 3 helical transmembrane segments spans residues 1–21 (MPESSRFGHLPWLLLSVLILV), 68–88 (WQRWFFAAIAIVVSVVLVVWL), and 94–114 (HETLLAVALAMVLGGALGNLY). Catalysis depends on residues Asp124 and Asp143. Residues 135–155 (FFPAFNLADTFITIGAILLAL) traverse the membrane as a helical segment.

This sequence belongs to the peptidase A8 family.

It is found in the cell inner membrane. The catalysed reaction is Release of signal peptides from bacterial membrane prolipoproteins. Hydrolyzes -Xaa-Yaa-Zaa-|-(S,diacylglyceryl)Cys-, in which Xaa is hydrophobic (preferably Leu), and Yaa (Ala or Ser) and Zaa (Gly or Ala) have small, neutral side chains.. It functions in the pathway protein modification; lipoprotein biosynthesis (signal peptide cleavage). In terms of biological role, this protein specifically catalyzes the removal of signal peptides from prolipoproteins. This chain is Lipoprotein signal peptidase, found in Ectopseudomonas mendocina (strain ymp) (Pseudomonas mendocina).